Consider the following 427-residue polypeptide: Dihydrofolate synthetase (427 aa).

34 to 37 contacts ATP; sequence GKGS. Mg(2+) contacts are provided by Glu-123 and His-153. Residues Arg-275 and Asp-296 each coordinate ATP.

The protein belongs to the folylpolyglutamate synthase family.

The protein resides in the cytoplasm. It catalyses the reaction 7,8-dihydropteroate + L-glutamate + ATP = 7,8-dihydrofolate + ADP + phosphate + H(+). It functions in the pathway cofactor biosynthesis; tetrahydrofolylpolyglutamate biosynthesis. Glutamate-adding enzyme which catalyzes the binding of the first glutamyl side chain to dihydropteroate. Leads to the de nove synthesis of tetrahydrofolate. This chain is Dihydrofolate synthetase (FOL3), found in Saccharomyces cerevisiae (strain ATCC 204508 / S288c) (Baker's yeast).